A 228-amino-acid polypeptide reads, in one-letter code: MAEDKTKPSELDQGKYDADDNVKIICLGDSAVGKSKLMERFLMDGFQPQQLSTYALTLYKHTATVDGKTILVDFWDTAGQERFQSMHASYYHKAHACIMVFDIQRKVTYRNLSTWYTELREFRPEIPCIVVANKIDDINVTQKSFNFAKKFSLPLYFVSAADGTNVVKLFNDAIRLAVSYKQNSQDFMDEIFQELENFSLEQEEEDVPDQEQSSSIETPSEEVASPHS.

GTP contacts are provided by residues 28-35 (GDSAVGKS), 76-80 (DTAGQ), and 133-136 (NKID). The segment at 200 to 228 (LEQEEEDVPDQEQSSSIETPSEEVASPHS) is disordered.

This sequence belongs to the small GTPase superfamily. Rab family. In terms of assembly, interacts with IFT27, IFT81, IFT172, ATP6V1E1, HK1, LDHC, MAPRE1 and HSPA2. As to expression, expressed in the testis.

In terms of biological role, plays an essential role in male fertility, sperm intra-flagellar transport, and tail assembly. Binds, in a GTP-regulated manner, to a specific set of effector proteins including key proteins involved in cilia development and function and delivers them into the growing sperm tail. This is Rab-like protein 2A (RABL2A) from Homo sapiens (Human).